A 716-amino-acid polypeptide reads, in one-letter code: Amino-acid acetyltransferase, mitochondrial (716 aa).

Residues 1 to 44 (MSLHTGWPRTVNSSFLKKHRSSLCTCQHTSSVLPRSFSTTPDRH) constitute a mitochondrion transit peptide. Residues 37–56 (FSTTPDRHVQQSADFSSTSR) show a composition bias toward polar residues. Disordered regions lie at residues 37 to 58 (FSTT…SRSY) and 96 to 121 (KAQH…TLPS). A compositionally biased stretch (basic and acidic residues) spans 101–112 (KSPDANKPEPEK). In terms of domain architecture, N-acetyltransferase spans 537–706 (SRPRLKLDDP…YEAVCRSIQP (170 aa)).

Belongs to the acetyltransferase family.

The protein localises to the mitochondrion. It carries out the reaction L-glutamate + acetyl-CoA = N-acetyl-L-glutamate + CoA + H(+). It participates in amino-acid biosynthesis; L-arginine biosynthesis; N(2)-acetyl-L-ornithine from L-glutamate: step 1/4. Its function is as follows. N-acetylglutamate synthase involved in arginine biosynthesis. The polypeptide is Amino-acid acetyltransferase, mitochondrial (arg2) (Aspergillus fumigatus (strain CBS 144.89 / FGSC A1163 / CEA10) (Neosartorya fumigata)).